Consider the following 220-residue polypeptide: 1-Cys peroxiredoxin A (220 aa).

One can recognise a Thioredoxin domain in the interval 4–165 (LTIGDTVPNL…VVRAVDALQT (162 aa)). The Cysteine sulfenic acid (-SOH) intermediate role is filled by C46. Residues 195–218 (KEKFPQGFDTADLPSGKGYLRFTK) carry the Bipartite nuclear localization signal motif.

Belongs to the peroxiredoxin family. Prx6 subfamily.

The protein resides in the nucleus. Its subcellular location is the cytoplasm. It carries out the reaction a hydroperoxide + [thioredoxin]-dithiol = an alcohol + [thioredoxin]-disulfide + H2O. Functionally, thiol-specific peroxidase that catalyzes the reduction of hydrogen peroxide and organic hydroperoxides to water and alcohols, respectively. Seems to contribute to the inhibition of germination during stress. The chain is 1-Cys peroxiredoxin A from Oryza sativa subsp. japonica (Rice).